The following is a 71-amino-acid chain: uncharacterized protein (71 aa).

This is an uncharacterized protein from Cassava vein mosaic virus (CsVMV).